Here is a 462-residue protein sequence, read N- to C-terminus: UDP-N-acetylmuramate--L-alanine ligase (462 aa).

112 to 118 (GTHGKTT) serves as a coordination point for ATP.

This sequence belongs to the MurCDEF family.

The protein resides in the cytoplasm. It catalyses the reaction UDP-N-acetyl-alpha-D-muramate + L-alanine + ATP = UDP-N-acetyl-alpha-D-muramoyl-L-alanine + ADP + phosphate + H(+). The protein operates within cell wall biogenesis; peptidoglycan biosynthesis. Functionally, cell wall formation. The polypeptide is UDP-N-acetylmuramate--L-alanine ligase (Geobacter sulfurreducens (strain ATCC 51573 / DSM 12127 / PCA)).